A 291-amino-acid polypeptide reads, in one-letter code: 33 kDa chaperonin (291 aa).

Disulfide bonds link Cys229–Cys231 and Cys262–Cys265.

It belongs to the HSP33 family. Under oxidizing conditions two disulfide bonds are formed involving the reactive cysteines. Under reducing conditions zinc is bound to the reactive cysteines and the protein is inactive.

The protein resides in the cytoplasm. Functionally, redox regulated molecular chaperone. Protects both thermally unfolding and oxidatively damaged proteins from irreversible aggregation. Plays an important role in the bacterial defense system toward oxidative stress. In Vibrio vulnificus (strain YJ016), this protein is 33 kDa chaperonin.